Reading from the N-terminus, the 88-residue chain is Cell division topological specificity factor (88 aa).

It belongs to the MinE family.

In terms of biological role, prevents the cell division inhibition by proteins MinC and MinD at internal division sites while permitting inhibition at polar sites. This ensures cell division at the proper site by restricting the formation of a division septum at the midpoint of the long axis of the cell. The chain is Cell division topological specificity factor from Clostridium kluyveri (strain ATCC 8527 / DSM 555 / NBRC 12016 / NCIMB 10680 / K1).